Here is a 377-residue protein sequence, read N- to C-terminus: Probable trehalose-phosphate phosphatase G (377 aa).

The interval 1–20 (MDLNINKTTPVLSDPTTPVS) is disordered.

The protein belongs to the trehalose phosphatase family. A divalent metal cation is required as a cofactor.

It carries out the reaction alpha,alpha-trehalose 6-phosphate + H2O = alpha,alpha-trehalose + phosphate. It functions in the pathway glycan biosynthesis; trehalose biosynthesis. Functionally, removes the phosphate from trehalose 6-phosphate to produce free trehalose. Trehalose accumulation in plant may improve abiotic stress tolerance. In Arabidopsis thaliana (Mouse-ear cress), this protein is Probable trehalose-phosphate phosphatase G (TPPG).